The following is a 183-amino-acid chain: Protein Syd (183 aa).

The protein belongs to the Syd family.

It localises to the cell inner membrane. Functionally, interacts with the SecY protein in vivo. May bind preferentially to an uncomplexed state of SecY, thus functioning either as a chelating agent for excess SecY in the cell or as a regulatory factor that negatively controls the translocase function. This is Protein Syd from Aliivibrio fischeri (strain MJ11) (Vibrio fischeri).